The following is an 890-amino-acid chain: Alanine--tRNA ligase (890 aa).

Positions 569, 573, 671, and 675 each coordinate Zn(2+).

The protein belongs to the class-II aminoacyl-tRNA synthetase family. Zn(2+) serves as cofactor.

Its subcellular location is the cytoplasm. It carries out the reaction tRNA(Ala) + L-alanine + ATP = L-alanyl-tRNA(Ala) + AMP + diphosphate. In terms of biological role, catalyzes the attachment of alanine to tRNA(Ala) in a two-step reaction: alanine is first activated by ATP to form Ala-AMP and then transferred to the acceptor end of tRNA(Ala). Also edits incorrectly charged Ser-tRNA(Ala) and Gly-tRNA(Ala) via its editing domain. The protein is Alanine--tRNA ligase of Synechococcus sp. (strain CC9902).